Consider the following 62-residue polypeptide: Ubiquinol-cytochrome c reductase complex 6.7 kDa protein (62 aa).

The Mitochondrial matrix portion of the chain corresponds to 2-25 (TSPAAAGNGLFKFLRPKLRPQSTD). The helical transmembrane segment at 26-44 (IQAAAGWGVAAVTGALWVI) threads the bilayer. The Mitochondrial intermembrane segment spans residues 45 to 62 (QPWDFLRKTFIEKQEEEK).

Belongs to the UQCR11/QCR10 family. In terms of assembly, component of the ubiquinol-cytochrome c oxidoreductase (cytochrome b-c1 complex, complex III, CIII), a multisubunit enzyme composed of 3 respiratory subunits cytochrome b, cytochrome c1 and Rieske protein, 2 core protein subunits, and additional low-molecular weight protein subunits. The complex exists as an obligatory dimer and forms supercomplexes (SCs) in the inner mitochondrial membrane with cytochrome c oxidase (complex IV, CIV).

It localises to the mitochondrion inner membrane. Its function is as follows. Component of the ubiquinol-cytochrome c oxidoreductase, a multisubunit transmembrane complex that is part of the mitochondrial electron transport chain which drives oxidative phosphorylation. The respiratory chain contains 3 multisubunit complexes succinate dehydrogenase (complex II, CII), ubiquinol-cytochrome c oxidoreductase (cytochrome b-c1 complex, complex III, CIII) and cytochrome c oxidase (complex IV, CIV), that cooperate to transfer electrons derived from NADH and succinate to molecular oxygen, creating an electrochemical gradient over the inner membrane that drives transmembrane transport and the ATP synthase. The cytochrome b-c1 complex catalyzes electron transfer from ubiquinol to cytochrome c, linking this redox reaction to translocation of protons across the mitochondrial inner membrane, with protons being carried across the membrane as hydrogens on the quinol. In the process called Q cycle, 2 protons are consumed from the matrix, 4 protons are released into the intermembrane space and 2 electrons are passed to cytochrome c. QCR10 has a role in CIII assembly and RIP1 stability. The polypeptide is Ubiquinol-cytochrome c reductase complex 6.7 kDa protein (Solanum tuberosum (Potato)).